The chain runs to 166 residues: NAD(P)H-quinone oxidoreductase subunit I, chloroplastic (166 aa).

4Fe-4S ferredoxin-type domains follow at residues Gly55–Lys84 and Leu95–Glu124. Positions 64, 67, 70, 74, 104, 107, 110, and 114 each coordinate [4Fe-4S] cluster.

This sequence belongs to the complex I 23 kDa subunit family. NDH is composed of at least 16 different subunits, 5 of which are encoded in the nucleus. The cofactor is [4Fe-4S] cluster.

The protein localises to the plastid. The protein resides in the chloroplast thylakoid membrane. It catalyses the reaction a plastoquinone + NADH + (n+1) H(+)(in) = a plastoquinol + NAD(+) + n H(+)(out). It carries out the reaction a plastoquinone + NADPH + (n+1) H(+)(in) = a plastoquinol + NADP(+) + n H(+)(out). Its function is as follows. NDH shuttles electrons from NAD(P)H:plastoquinone, via FMN and iron-sulfur (Fe-S) centers, to quinones in the photosynthetic chain and possibly in a chloroplast respiratory chain. The immediate electron acceptor for the enzyme in this species is believed to be plastoquinone. Couples the redox reaction to proton translocation, and thus conserves the redox energy in a proton gradient. This Chaetymenia peduncularis (Daisy) protein is NAD(P)H-quinone oxidoreductase subunit I, chloroplastic.